Consider the following 234-residue polypeptide: tRNA1(Val) (adenine(37)-N6)-methyltransferase (234 aa).

It belongs to the methyltransferase superfamily. tRNA (adenine-N(6)-)-methyltransferase family.

The protein localises to the cytoplasm. It carries out the reaction adenosine(37) in tRNA1(Val) + S-adenosyl-L-methionine = N(6)-methyladenosine(37) in tRNA1(Val) + S-adenosyl-L-homocysteine + H(+). In terms of biological role, specifically methylates the adenine in position 37 of tRNA(1)(Val) (anticodon cmo5UAC). The sequence is that of tRNA1(Val) (adenine(37)-N6)-methyltransferase from Aliivibrio fischeri (strain ATCC 700601 / ES114) (Vibrio fischeri).